A 337-amino-acid polypeptide reads, in one-letter code: Prenyltransferase terC (337 aa).

Aspartate 111 and aspartate 115 together coordinate Mg(2+).

It belongs to the FPP/GGPP synthase family. Requires Mg(2+) as cofactor.

It participates in secondary metabolite biosynthesis. Prenyltransferase; part of the gene cluster that mediates the biosynthesis of terpendoles, indole-diterpene (IDT) mycotoxins including terpendole I, terpendole K, terpendole C, as well as the kinesin Eg5 inhibitor terpendole E. Terpendoles biosynthesis begins with the synthesis of geranylgeranyl diphosphate (GGPP) by a yet unidentified GGPP synthase. Condensation of indole-3-glycerol phosphate with GGPP by the prenyltransferase terC then forms 3-geranylgeranylindole (3-GGI), followed by epoxidation and cyclization of this intermediate (by the FAD-dependent monooxygeanse terM and the terpene cyclase terB) to form paspaline. The cytochrome monooxygenase terQ then hydroxylates paspalline at C-11 to yield terpendole E. The cytochrome monooxygenase terP converts terpendole E to 13-desoxyterpendole I, and terQ converts 13-desoxyterpendole I into terpendole I. TerF and terK are required for conversion of terpendole I to terpendole C which is further converted to terpendole K. The polypeptide is Prenyltransferase terC (Tolypocladium album (Soil fungus)).